A 264-amino-acid chain; its full sequence is 3-methyl-2-oxobutanoate hydroxymethyltransferase (264 aa).

Residues aspartate 45 and aspartate 84 each contribute to the Mg(2+) site. Residues 45-46 (DS), aspartate 84, and lysine 112 each bind 3-methyl-2-oxobutanoate. Glutamate 114 serves as a coordination point for Mg(2+). Glutamate 181 acts as the Proton acceptor in catalysis.

The protein belongs to the PanB family. As to quaternary structure, homodecamer; pentamer of dimers. It depends on Mg(2+) as a cofactor.

The protein resides in the cytoplasm. The enzyme catalyses 3-methyl-2-oxobutanoate + (6R)-5,10-methylene-5,6,7,8-tetrahydrofolate + H2O = 2-dehydropantoate + (6S)-5,6,7,8-tetrahydrofolate. It functions in the pathway cofactor biosynthesis; (R)-pantothenate biosynthesis; (R)-pantoate from 3-methyl-2-oxobutanoate: step 1/2. Its function is as follows. Catalyzes the reversible reaction in which hydroxymethyl group from 5,10-methylenetetrahydrofolate is transferred onto alpha-ketoisovalerate to form ketopantoate. This chain is 3-methyl-2-oxobutanoate hydroxymethyltransferase, found in Escherichia fergusonii (strain ATCC 35469 / DSM 13698 / CCUG 18766 / IAM 14443 / JCM 21226 / LMG 7866 / NBRC 102419 / NCTC 12128 / CDC 0568-73).